The sequence spans 236 residues: 6-carboxyhexanoate--CoA ligase (236 aa).

Belongs to the BioW family. In terms of assembly, homodimer. The cofactor is Mg(2+).

It carries out the reaction heptanedioate + ATP + CoA = 6-carboxyhexanoyl-CoA + AMP + diphosphate. Its pathway is metabolic intermediate metabolism; pimeloyl-CoA biosynthesis; pimeloyl-CoA from pimelate: step 1/1. In terms of biological role, catalyzes the transformation of pimelate into pimeloyl-CoA with concomitant hydrolysis of ATP to AMP. In Methanococcus aeolicus (strain ATCC BAA-1280 / DSM 17508 / OCM 812 / Nankai-3), this protein is 6-carboxyhexanoate--CoA ligase.